A 229-amino-acid polypeptide reads, in one-letter code: 2-C-methyl-D-erythritol 4-phosphate cytidylyltransferase (229 aa).

The protein belongs to the IspD/TarI cytidylyltransferase family. IspD subfamily.

It carries out the reaction 2-C-methyl-D-erythritol 4-phosphate + CTP + H(+) = 4-CDP-2-C-methyl-D-erythritol + diphosphate. The protein operates within isoprenoid biosynthesis; isopentenyl diphosphate biosynthesis via DXP pathway; isopentenyl diphosphate from 1-deoxy-D-xylulose 5-phosphate: step 2/6. Catalyzes the formation of 4-diphosphocytidyl-2-C-methyl-D-erythritol from CTP and 2-C-methyl-D-erythritol 4-phosphate (MEP). The protein is 2-C-methyl-D-erythritol 4-phosphate cytidylyltransferase of Neisseria gonorrhoeae (strain NCCP11945).